The following is a 105-amino-acid chain: Phosphoribosyl-AMP cyclohydrolase (105 aa).

D72 is a binding site for Mg(2+). Residue C73 coordinates Zn(2+). Mg(2+)-binding residues include D74 and D76. Zn(2+) contacts are provided by C89 and C96.

It belongs to the PRA-CH family. In terms of assembly, homodimer. It depends on Mg(2+) as a cofactor. Zn(2+) is required as a cofactor.

It is found in the cytoplasm. The enzyme catalyses 1-(5-phospho-beta-D-ribosyl)-5'-AMP + H2O = 1-(5-phospho-beta-D-ribosyl)-5-[(5-phospho-beta-D-ribosylamino)methylideneamino]imidazole-4-carboxamide. The protein operates within amino-acid biosynthesis; L-histidine biosynthesis; L-histidine from 5-phospho-alpha-D-ribose 1-diphosphate: step 3/9. Catalyzes the hydrolysis of the adenine ring of phosphoribosyl-AMP. This chain is Phosphoribosyl-AMP cyclohydrolase, found in Listeria innocua serovar 6a (strain ATCC BAA-680 / CLIP 11262).